Consider the following 188-residue polypeptide: MGVDIRHNKDRKVRRKEPKSQDIYLRLLVKLYRFLARRTNSTFNQVVLKRLFMSRTNRPPLSLSRMIRKMKLPGRENKTAVVVGTVTDDVRILEVPKLKVCALRVSSRARSRILKAGGKILTFDQLALESPKGRGTVLLSGPRKGREVYRHFGKAPGTPHSHTKPYVRSKGRKFERARGRRASRGYKN.

A Glycyl lysine isopeptide (Lys-Gly) (interchain with G-Cter in SUMO2) cross-link involves residue Lys119. At Ser130 the chain carries Phosphoserine. The tract at residues 150–188 (RHFGKAPGTPHSHTKPYVRSKGRKFERARGRRASRGYKN) is disordered. Phosphothreonine is present on Thr158. 2 stretches are compositionally biased toward basic residues: residues 161–171 (SHTKPYVRSKG) and 178–188 (RGRRASRGYKN). A Glycyl lysine isopeptide (Lys-Gly) (interchain with G-Cter in SUMO2) cross-link involves residue Lys164.

The protein belongs to the eukaryotic ribosomal protein eL18 family. Component of the large ribosomal subunit.

It localises to the cytoplasm. The protein localises to the cytosol. The protein resides in the rough endoplasmic reticulum. In terms of biological role, component of the large ribosomal subunit. The ribosome is a large ribonucleoprotein complex responsible for the synthesis of proteins in the cell. The sequence is that of Large ribosomal subunit protein eL18 (Rpl18) from Mus musculus (Mouse).